A 513-amino-acid polypeptide reads, in one-letter code: Ribonuclease Y (513 aa).

The helical transmembrane segment at 3–23 (IGTLLLFTFLGLVAGATAVWL) threads the bilayer. The disordered stretch occupies residues 77 to 96 (LQSVESKLKSREQTLNQRQE). The span at 82-96 (SKLKSREQTLNQRQE) shows a compositional bias: basic and acidic residues. A KH domain is found at 203–263 (SVTVFHIESD…VRREIARLAL (61 aa)). In terms of domain architecture, HD spans 329-422 (LLQHSRETAN…VQVCDAISGA (94 aa)).

This sequence belongs to the RNase Y family.

The protein resides in the cell membrane. In terms of biological role, endoribonuclease that initiates mRNA decay. This chain is Ribonuclease Y, found in Porphyromonas gingivalis (strain ATCC BAA-308 / W83).